The sequence spans 239 residues: 1-(5-phosphoribosyl)-5-[(5-phosphoribosylamino)methylideneamino] imidazole-4-carboxamide isomerase (239 aa).

Aspartate 9 functions as the Proton acceptor in the catalytic mechanism. The active-site Proton donor is aspartate 131.

This sequence belongs to the HisA/HisF family.

Its subcellular location is the cytoplasm. The catalysed reaction is 1-(5-phospho-beta-D-ribosyl)-5-[(5-phospho-beta-D-ribosylamino)methylideneamino]imidazole-4-carboxamide = 5-[(5-phospho-1-deoxy-D-ribulos-1-ylimino)methylamino]-1-(5-phospho-beta-D-ribosyl)imidazole-4-carboxamide. It functions in the pathway amino-acid biosynthesis; L-histidine biosynthesis; L-histidine from 5-phospho-alpha-D-ribose 1-diphosphate: step 4/9. This is 1-(5-phosphoribosyl)-5-[(5-phosphoribosylamino)methylideneamino] imidazole-4-carboxamide isomerase from Bacteroides fragilis (strain ATCC 25285 / DSM 2151 / CCUG 4856 / JCM 11019 / LMG 10263 / NCTC 9343 / Onslow / VPI 2553 / EN-2).